The chain runs to 138 residues: MSITVRVITPDRIVWDNVAEEVILPSSTGQLGILSGHAPLLTALNIGVMRIRPGKDWENIAVLGGFAEVENNEIKVLVNGAELGSKIDKEKARAEYERAQTRLDEVSKGDDRRKTIQAQQSWRKARARYQAAGGLVSV.

The protein belongs to the ATPase epsilon chain family. As to quaternary structure, F-type ATPases have 2 components, CF(1) - the catalytic core - and CF(0) - the membrane proton channel. CF(1) has five subunits: alpha(3), beta(3), gamma(1), delta(1), epsilon(1). CF(0) has three main subunits: a, b and c.

Its subcellular location is the cellular thylakoid membrane. Its function is as follows. Produces ATP from ADP in the presence of a proton gradient across the membrane. The sequence is that of ATP synthase epsilon chain from Microcystis aeruginosa (strain NIES-843 / IAM M-2473).